We begin with the raw amino-acid sequence, 416 residues long: Serine hydroxymethyltransferase (416 aa).

Residues leucine 118 and glycine 122–leucine 124 each bind (6S)-5,6,7,8-tetrahydrofolate. An N6-(pyridoxal phosphate)lysine modification is found at lysine 227. (6S)-5,6,7,8-tetrahydrofolate contacts are provided by residues glutamate 242 and serine 350–phenylalanine 352.

Belongs to the SHMT family. Homodimer. It depends on pyridoxal 5'-phosphate as a cofactor.

The protein resides in the cytoplasm. It catalyses the reaction (6R)-5,10-methylene-5,6,7,8-tetrahydrofolate + glycine + H2O = (6S)-5,6,7,8-tetrahydrofolate + L-serine. It participates in one-carbon metabolism; tetrahydrofolate interconversion. The protein operates within amino-acid biosynthesis; glycine biosynthesis; glycine from L-serine: step 1/1. Catalyzes the reversible interconversion of serine and glycine with tetrahydrofolate (THF) serving as the one-carbon carrier. This reaction serves as the major source of one-carbon groups required for the biosynthesis of purines, thymidylate, methionine, and other important biomolecules. Also exhibits THF-independent aldolase activity toward beta-hydroxyamino acids, producing glycine and aldehydes, via a retro-aldol mechanism. In Syntrophotalea carbinolica (strain DSM 2380 / NBRC 103641 / GraBd1) (Pelobacter carbinolicus), this protein is Serine hydroxymethyltransferase.